We begin with the raw amino-acid sequence, 282 residues long: Acetyl-coenzyme A carboxylase carboxyl transferase subunit beta 1 (282 aa).

One can recognise a CoA carboxyltransferase N-terminal domain in the interval 23-282 (LMTKCPECRH…MHTKGGVQHV (260 aa)). C27, C30, C46, and C49 together coordinate Zn(2+). A C4-type zinc finger spans residues 27–49 (CPECRHILLTKELEKNHKVCTKC).

The protein belongs to the AccD/PCCB family. As to quaternary structure, acetyl-CoA carboxylase is a heterohexamer composed of biotin carboxyl carrier protein (AccB), biotin carboxylase (AccC) and two subunits each of ACCase subunit alpha (AccA) and ACCase subunit beta (AccD). It depends on Zn(2+) as a cofactor.

The protein localises to the cytoplasm. It carries out the reaction N(6)-carboxybiotinyl-L-lysyl-[protein] + acetyl-CoA = N(6)-biotinyl-L-lysyl-[protein] + malonyl-CoA. It participates in lipid metabolism; malonyl-CoA biosynthesis; malonyl-CoA from acetyl-CoA: step 1/1. In terms of biological role, component of the acetyl coenzyme A carboxylase (ACC) complex. Biotin carboxylase (BC) catalyzes the carboxylation of biotin on its carrier protein (BCCP) and then the CO(2) group is transferred by the transcarboxylase to acetyl-CoA to form malonyl-CoA. The protein is Acetyl-coenzyme A carboxylase carboxyl transferase subunit beta 1 of Lysinibacillus sphaericus (strain C3-41).